The sequence spans 234 residues: Phosphoribosylaminoimidazole-succinocarboxamide synthase (234 aa).

The protein belongs to the SAICAR synthetase family.

It catalyses the reaction 5-amino-1-(5-phospho-D-ribosyl)imidazole-4-carboxylate + L-aspartate + ATP = (2S)-2-[5-amino-1-(5-phospho-beta-D-ribosyl)imidazole-4-carboxamido]succinate + ADP + phosphate + 2 H(+). It participates in purine metabolism; IMP biosynthesis via de novo pathway; 5-amino-1-(5-phospho-D-ribosyl)imidazole-4-carboxamide from 5-amino-1-(5-phospho-D-ribosyl)imidazole-4-carboxylate: step 1/2. This is Phosphoribosylaminoimidazole-succinocarboxamide synthase from Streptococcus agalactiae serotype V (strain ATCC BAA-611 / 2603 V/R).